The chain runs to 183 residues: GTP cyclohydrolase 1 (183 aa).

Residues cysteine 71, histidine 74, and cysteine 142 each contribute to the Zn(2+) site.

It belongs to the GTP cyclohydrolase I family. In terms of assembly, toroid-shaped homodecamer, composed of two pentamers of five dimers.

The enzyme catalyses GTP + H2O = 7,8-dihydroneopterin 3'-triphosphate + formate + H(+). The protein operates within cofactor biosynthesis; 7,8-dihydroneopterin triphosphate biosynthesis; 7,8-dihydroneopterin triphosphate from GTP: step 1/1. This is GTP cyclohydrolase 1 from Leptospira interrogans serogroup Icterohaemorrhagiae serovar copenhageni (strain Fiocruz L1-130).